A 637-amino-acid chain; its full sequence is Chaperone protein HtpG (637 aa).

Positions 1–345 (MTAAQKETLG…SNDLPLNVSR (345 aa)) are a; substrate-binding. The tract at residues 346 to 562 (EILQDNKVTQ…DNDMSSQMQK (217 aa)) is b. Residues 563–637 (LMESVGQAAP…LNKLMLELSK (75 aa)) are c.

The protein belongs to the heat shock protein 90 family. Homodimer.

The protein resides in the cytoplasm. In terms of biological role, molecular chaperone. Has ATPase activity. The polypeptide is Chaperone protein HtpG (Pseudoalteromonas translucida (strain TAC 125)).